Reading from the N-terminus, the 401-residue chain is Argininosuccinate synthase (401 aa).

ATP-binding positions include 10–18 (AYSGGVDTS) and Ala38. Tyr89 is a binding site for L-citrulline. Gly119 is a binding site for ATP. Thr121, Asn125, and Asp126 together coordinate L-aspartate. Asn125 contributes to the L-citrulline binding site. Residues Arg129, Ser177, Ser186, Glu262, and Tyr274 each contribute to the L-citrulline site.

It belongs to the argininosuccinate synthase family. Type 1 subfamily. In terms of assembly, homotetramer.

Its subcellular location is the cytoplasm. The catalysed reaction is L-citrulline + L-aspartate + ATP = 2-(N(omega)-L-arginino)succinate + AMP + diphosphate + H(+). It functions in the pathway amino-acid biosynthesis; L-arginine biosynthesis; L-arginine from L-ornithine and carbamoyl phosphate: step 2/3. The polypeptide is Argininosuccinate synthase (Microcystis aeruginosa (strain NIES-843 / IAM M-2473)).